The sequence spans 649 residues: Archaeal Lon protease (649 aa).

Residues 1 to 114 are Cytoplasmic-facing; it reads MFSIKFKTTE…KLDFKAPSST (114 aa). Residue 47 to 54 participates in ATP binding; it reads GDPGVGKS. The chain crosses the membrane as a helical span at residues 115-135; that stretch reads TLLLIMIGAILLSEYLLKYLP. Over 136–138 the chain is Extracellular; sequence QNY. A helical transmembrane segment spans residues 139–159; it reads LLAAVTITALIVLIFGFVIIL. The Cytoplasmic portion of the chain corresponds to 160 to 649; the sequence is TSIMGASRAS…DNRGGAERFN (490 aa). The Lon proteolytic domain maps to 456 to 639; that stretch reads EPKVGVIYGL…DEIVPLVFDL (184 aa). Active-site residues include serine 550 and lysine 593.

Belongs to the peptidase S16 family. Archaeal LonB subfamily. As to quaternary structure, homohexamer. Organized in a ring with a central cavity.

The protein resides in the cell membrane. In terms of biological role, ATP-dependent serine protease that mediates the selective degradation of mutant and abnormal proteins as well as certain short-lived regulatory proteins. Degrades polypeptides processively. This chain is Archaeal Lon protease, found in Methanocaldococcus jannaschii (strain ATCC 43067 / DSM 2661 / JAL-1 / JCM 10045 / NBRC 100440) (Methanococcus jannaschii).